The primary structure comprises 472 residues: Protein nucleotidyltransferase YdiU (472 aa).

Residues Gly86, Gly88, Arg89, Lys109, Asp121, Gly122, Arg172, and Arg179 each contribute to the ATP site. Asp244 functions as the Proton acceptor in the catalytic mechanism. Positions 245 and 254 each coordinate Mg(2+). ATP is bound at residue Asp254.

Belongs to the SELO family. Requires Mg(2+) as cofactor. It depends on Mn(2+) as a cofactor.

It carries out the reaction L-seryl-[protein] + ATP = 3-O-(5'-adenylyl)-L-seryl-[protein] + diphosphate. The catalysed reaction is L-threonyl-[protein] + ATP = 3-O-(5'-adenylyl)-L-threonyl-[protein] + diphosphate. The enzyme catalyses L-tyrosyl-[protein] + ATP = O-(5'-adenylyl)-L-tyrosyl-[protein] + diphosphate. It catalyses the reaction L-histidyl-[protein] + UTP = N(tele)-(5'-uridylyl)-L-histidyl-[protein] + diphosphate. It carries out the reaction L-seryl-[protein] + UTP = O-(5'-uridylyl)-L-seryl-[protein] + diphosphate. The catalysed reaction is L-tyrosyl-[protein] + UTP = O-(5'-uridylyl)-L-tyrosyl-[protein] + diphosphate. Functionally, nucleotidyltransferase involved in the post-translational modification of proteins. It can catalyze the addition of adenosine monophosphate (AMP) or uridine monophosphate (UMP) to a protein, resulting in modifications known as AMPylation and UMPylation. This Ruegeria sp. (strain TM1040) (Silicibacter sp.) protein is Protein nucleotidyltransferase YdiU.